Consider the following 128-residue polypeptide: Glycine cleavage system H protein (128 aa).

The 83-residue stretch at 22–104 folds into the Lipoyl-binding domain; the sequence is TALVGVTDYA…YASGWLVKIK (83 aa). At K63 the chain carries N6-lipoyllysine.

It belongs to the GcvH family. The glycine cleavage system is composed of four proteins: P, T, L and H. Requires (R)-lipoate as cofactor.

The glycine cleavage system catalyzes the degradation of glycine. The H protein shuttles the methylamine group of glycine from the P protein to the T protein. This Halothermothrix orenii (strain H 168 / OCM 544 / DSM 9562) protein is Glycine cleavage system H protein.